The sequence spans 914 residues: DNA mismatch repair protein MutS (914 aa).

A disordered region spans residues 1 to 24 (MDNKTDNKNNLTPQSAPSSAPHKE). The segment covering 8-18 (KNNLTPQSAPS) has biased composition (polar residues). Residue 662-669 (GPNMGGKS) coordinates ATP.

It belongs to the DNA mismatch repair MutS family.

Functionally, this protein is involved in the repair of mismatches in DNA. It is possible that it carries out the mismatch recognition step. This protein has a weak ATPase activity. In Bartonella henselae (strain ATCC 49882 / DSM 28221 / CCUG 30454 / Houston 1) (Rochalimaea henselae), this protein is DNA mismatch repair protein MutS.